The chain runs to 275 residues: Putative methylglyoxal reductase DkgA (275 aa).

The active-site Proton donor is the Y51. H107 contacts substrate. 187–241 (SPLAQGGEGVFDQKVIRELADKYGKTPAQIVIRWHLDCGLVVIPKSVTPSRIAEN) serves as a coordination point for NADP(+).

This sequence belongs to the aldo/keto reductase family. In terms of assembly, monomer.

It localises to the cytoplasm. It catalyses the reaction hydroxyacetone + NADP(+) = methylglyoxal + NADPH + H(+). Aldo-keto reductase that significantly contributes to cellular methylglyoxal detoxification by catalyzing the NADPH-dependent conversion of methylglyoxal to acetol. This is Putative methylglyoxal reductase DkgA from Salmonella typhi.